A 614-amino-acid chain; its full sequence is MSDINSNSYDPYHHPQQHQQESQYHPQQQQQQQQQQQQQQEYYNQQHQQESQYQQQSPPQQQYDNHQHHQQDLNQAHNSGHGRSHNSGHGHSHGNNYSGLPHLRTQVGHAQPYFSSYNELNNSGDISNSNNNNNNNNQYNYNNNNNNNNYNNNINNNQFNSSVYNNNNNNNNNNNNEFSIDGKSGITIKHLLNNLNRDSDAKKLAAWISVMLVFTIYEIFYGAYLESLGLVSDGFHALFDCIGMGIALLAMLVGKRGISNQEYTYGYDRWEVLGTFSNGCFLLFVSFFLFLESIERLLEPPHIHNHGRVMSLATISLIINIVGVLFFKQKSNERKQQSSIRSENLLTISHHILVDSCTSLGVILSSLVGQAFGLEISDSLISIIIACIIVYNALPICIKTSAILLQTTPDQLKININNAIKDILVMEGVIDVTDKHFWSHSPGNIIATVNLLTKKNCDDFTLTQSIRNRLSFVQDLTIQLDKEGKHNSHSHGGAHHHPHEHKEDKKSHNHSHGHNHGHSHGHSHGGNDDHEHGENCDEEHEPVPKYQVQPTSPFSSHYTDIHSNNTPIPLYKSEQDDEDDEDDYDHDEHHHDHDHDEHHHGHSHNSSHSHAHNH.

2 disordered regions span residues 1–103 and 115–178; these read MSDI…LPHL and SSYN…NNEF. Topologically, residues 1 to 203 are cytoplasmic; the sequence is MSDINSNSYD…NLNRDSDAKK (203 aa). The segment covering 17-64 has biased composition (low complexity); sequence QHQQESQYHPQQQQQQQQQQQQQQEYYNQQHQQESQYQQQSPPQQQYD. The segment covering 80–92 has biased composition (basic residues); that stretch reads GHGRSHNSGHGHS. A compositionally biased stretch (low complexity) spans 121 to 176; the sequence is NNSGDISNSNNNNNNNNQYNYNNNNNNNNYNNNINNNQFNSSVYNNNNNNNNNNNN. The chain crosses the membrane as a helical span at residues 204–224; it reads LAAWISVMLVFTIYEIFYGAY. At 225–233 the chain is on the extracellular side; the sequence is LESLGLVSD. The helical transmembrane segment at 234 to 254 threads the bilayer; it reads GFHALFDCIGMGIALLAMLVG. The Cytoplasmic portion of the chain corresponds to 255-270; it reads KRGISNQEYTYGYDRW. The chain crosses the membrane as a helical span at residues 271-291; that stretch reads EVLGTFSNGCFLLFVSFFLFL. At 292-306 the chain is on the extracellular side; the sequence is ESIERLLEPPHIHNH. Residues 307–327 form a helical membrane-spanning segment; that stretch reads GRVMSLATISLIINIVGVLFF. The Cytoplasmic portion of the chain corresponds to 328-351; sequence KQKSNERKQQSSIRSENLLTISHH. The helical transmembrane segment at 352–372 threads the bilayer; that stretch reads ILVDSCTSLGVILSSLVGQAF. At 373-377 the chain is on the extracellular side; the sequence is GLEIS. Residues 378-398 form a helical membrane-spanning segment; it reads DSLISIIIACIIVYNALPICI. Topologically, residues 399–614 are cytoplasmic; that stretch reads KTSAILLQTT…NSSHSHAHNH (216 aa). The segment at 483-614 is disordered; it reads EGKHNSHSHG…NSSHSHAHNH (132 aa). 2 stretches are compositionally biased toward basic residues: residues 487–499 and 507–523; these read NSHS…HHPH and SHNH…HGHS. Positions 525–535 are enriched in basic and acidic residues; sequence GGNDDHEHGEN. Residues 548-567 show a composition bias toward polar residues; sequence VQPTSPFSSHYTDIHSNNTP. Residues 575 to 585 are compositionally biased toward acidic residues; it reads QDDEDDEDDYD. Basic and acidic residues predominate over residues 586-599; sequence HDEHHHDHDHDEHH. Residues 600–614 are compositionally biased toward basic residues; the sequence is HGHSHNSSHSHAHNH.

The protein belongs to the cation diffusion facilitator (CDF) transporter (TC 2.A.4) family. SLC30A subfamily.

The protein localises to the membrane. In terms of biological role, may be involved in zinc transport from the cytoplasm to either intracellular organelles or extracellular spaces. This Dictyostelium discoideum (Social amoeba) protein is Probable zinc transporter protein DDB_G0269332.